The following is a 1036-amino-acid chain: ADAMTS-like protein 4 (1036 aa).

Positions 1-24 (MESWLGRLWLCMMLLLPLPQPCQD) are cleaved as a signal peptide. The region spanning 47–91 (GPWGRWASCSQPCGVGVQRRSRTCELHPALPLPPRPPRHPEAHRP) is the TSP type-1 1 domain. Disordered stretches follow at residues 73 to 149 (HPAL…IKPG) and 163 to 308 (HRSR…WLPL). Residues 163–173 (HRSRRHPHRPG) show a composition bias toward basic residues. The span at 215–253 (TPRSGTAQTEVLPRTSSAPSYTGTPAPTSSFGDSRSFQG) shows a compositional bias: polar residues. 2 N-linked (GlcNAc...) asparagine glycosylation sites follow: asparagine 454 and asparagine 737. TSP type-1 domains follow at residues 687-748 (CPPY…HLCG), 750-804 (WEIS…DMGP), 805-871 (CTTA…GPCE), 872-931 (RTWR…QGQA), and 932-988 (CEDK…QPCN). The region spanning 991–1028 (PDDQCKDSSPHCPLVVQARLCVYPYYTTTCCRSCAHVL) is the PLAC domain.

Interacts with CTSB. Interacts with FBN1. Post-translationally, glycosylated. Can be O-fucosylated by POFUT2 on a serine or a threonine residue found within the consensus sequence C1-X(2)-(S/T)-C2-G of the TSP type-1 repeat domains where C1 and C2 are the first and second cysteine residue of the repeat, respectively. Fucosylated repeats can then be further glycosylated by the addition of a beta-1,3-glucose residue by the glucosyltransferase, B3GALTL. Fucosylation mediates the efficient secretion of ADAMTS family members. Can also be C-glycosylated with one or two mannose molecules on tryptophan residues within the consensus sequence W-X-X-W of the TPRs, and N-glycosylated. These other glycosylations can also facilitate secretion. As to expression, widely expressed in a range of tissues. Especially prevalent in brain, spinal cord, muscle, lung and heart.

It localises to the secreted. The protein resides in the extracellular space. Its subcellular location is the extracellular matrix. Positive regulation of apoptosis. May facilitate FBN1 microfibril biogenesis. This Mus musculus (Mouse) protein is ADAMTS-like protein 4.